Here is a 241-residue protein sequence, read N- to C-terminus: Uridylate kinase (241 aa).

9–10 (GS) provides a ligand contact to ATP. G44 serves as a coordination point for UMP. Residues G45 and R49 each coordinate ATP. Residues D66 and 114–120 (VVAGQTT) contribute to the UMP site. Positions 140, 146, and 149 each coordinate ATP.

It belongs to the UMP kinase family. In terms of assembly, homohexamer.

It is found in the cytoplasm. The enzyme catalyses UMP + ATP = UDP + ADP. The protein operates within pyrimidine metabolism; CTP biosynthesis via de novo pathway; UDP from UMP (UMPK route): step 1/1. Its activity is regulated as follows. Inhibited by UTP. Functionally, catalyzes the reversible phosphorylation of UMP to UDP. The polypeptide is Uridylate kinase (Halobacterium salinarum (strain ATCC 29341 / DSM 671 / R1)).